The chain runs to 241 residues: Ribosomal RNA small subunit methyltransferase G (241 aa).

S-adenosyl-L-methionine is bound by residues Gly-96, Phe-101, 119–121 (EAS), 147–148 (VE), and Arg-166.

Belongs to the methyltransferase superfamily. RNA methyltransferase RsmG family.

The protein resides in the cytoplasm. It carries out the reaction guanosine(527) in 16S rRNA + S-adenosyl-L-methionine = N(7)-methylguanosine(527) in 16S rRNA + S-adenosyl-L-homocysteine. Specifically methylates the N7 position of guanine in position 527 of 16S rRNA. This chain is Ribosomal RNA small subunit methyltransferase G, found in Syntrophus aciditrophicus (strain SB).